We begin with the raw amino-acid sequence, 269 residues long: Surfeit locus protein 4 (269 aa).

5 helical membrane passes run 64 to 84 (FLAT…CVLI), 92 to 112 (YACF…SILW), 179 to 199 (FFSI…AIGF), 203 to 223 (LAAL…NAFW), and 242 to 262 (TTSV…GVSM). The Di-lysine motif signature appears at 266–269 (KKEW).

This sequence belongs to the SURF4 family.

The protein localises to the endoplasmic reticulum membrane. It is found in the endoplasmic reticulum-Golgi intermediate compartment membrane. Its subcellular location is the golgi apparatus membrane. In terms of biological role, endoplasmic reticulum cargo receptor that mediates the export of lipoproteins by recruiting cargos into COPII vesicles to facilitate their secretion. Acts as a cargo receptor for lipoproteins bearing both APOB and APOA1, thereby regulating lipoprotein delivery and the maintenance of lipid homeostasis. The polypeptide is Surfeit locus protein 4 (Takifugu rubripes (Japanese pufferfish)).